Here is a 490-residue protein sequence, read N- to C-terminus: Betaine aldehyde dehydrogenase (490 aa).

K(+) is bound by residues Thr-26, Ile-27, and Asp-93. An NAD(+)-binding site is contributed by 150–152; that stretch reads GAW. Catalysis depends on Lys-162, which acts as the Charge relay system. 176-179 is a binding site for NAD(+); the sequence is KPSE. Residue Val-180 participates in K(+) binding. 230–233 serves as a coordination point for NAD(+); it reads GVAS. Leu-246 contributes to the K(+) binding site. Catalysis depends on Glu-252, which acts as the Proton acceptor. NAD(+)-binding residues include Gly-254, Cys-286, and Glu-387. Catalysis depends on Cys-286, which acts as the Nucleophile. A Cysteine sulfenic acid (-SOH) modification is found at Cys-286. K(+) is bound by residues Lys-457 and Gly-460. Glu-464 functions as the Charge relay system in the catalytic mechanism.

The protein belongs to the aldehyde dehydrogenase family. Dimer of dimers. It depends on K(+) as a cofactor.

It catalyses the reaction betaine aldehyde + NAD(+) + H2O = glycine betaine + NADH + 2 H(+). It functions in the pathway amine and polyamine biosynthesis; betaine biosynthesis via choline pathway; betaine from betaine aldehyde: step 1/1. Involved in the biosynthesis of the osmoprotectant glycine betaine. Catalyzes the irreversible oxidation of betaine aldehyde to the corresponding acid. This chain is Betaine aldehyde dehydrogenase, found in Escherichia coli (strain SMS-3-5 / SECEC).